A 593-amino-acid chain; its full sequence is Genetic interactor of prohibitins 3, mitochondrial (593 aa).

The transit peptide at 1-61 (MLGRIRPFVR…NPSKPGFYRP (61 aa)) directs the protein to the mitochondrion. Residues 142–349 (VESIDKIMST…IVDVPGFSAN (208 aa)) enclose the CP-type G domain.

It belongs to the TRAFAC class YlqF/YawG GTPase family. GEP3 subfamily.

It is found in the mitochondrion. Its function is as follows. May be involved in the mitochondrial lipid metabolism. This is Genetic interactor of prohibitins 3, mitochondrial (GEP3) from Debaryomyces hansenii (strain ATCC 36239 / CBS 767 / BCRC 21394 / JCM 1990 / NBRC 0083 / IGC 2968) (Yeast).